A 547-amino-acid chain; its full sequence is Glucose-6-phosphate isomerase (547 aa).

E353 functions as the Proton donor in the catalytic mechanism. Catalysis depends on residues H384 and K512.

The protein belongs to the GPI family.

The protein localises to the cytoplasm. The catalysed reaction is alpha-D-glucose 6-phosphate = beta-D-fructose 6-phosphate. It functions in the pathway carbohydrate biosynthesis; gluconeogenesis. Its pathway is carbohydrate degradation; glycolysis; D-glyceraldehyde 3-phosphate and glycerone phosphate from D-glucose: step 2/4. Functionally, catalyzes the reversible isomerization of glucose-6-phosphate to fructose-6-phosphate. The polypeptide is Glucose-6-phosphate isomerase (Campylobacter jejuni subsp. doylei (strain ATCC BAA-1458 / RM4099 / 269.97)).